The following is a 248-amino-acid chain: DNA repair protein RecO (248 aa).

This sequence belongs to the RecO family.

Involved in DNA repair and RecF pathway recombination. This Bradyrhizobium sp. (strain BTAi1 / ATCC BAA-1182) protein is DNA repair protein RecO.